A 207-amino-acid chain; its full sequence is 3-isopropylmalate dehydratase small subunit (207 aa).

This sequence belongs to the LeuD family. LeuD type 1 subfamily. As to quaternary structure, heterodimer of LeuC and LeuD.

It catalyses the reaction (2R,3S)-3-isopropylmalate = (2S)-2-isopropylmalate. It participates in amino-acid biosynthesis; L-leucine biosynthesis; L-leucine from 3-methyl-2-oxobutanoate: step 2/4. Catalyzes the isomerization between 2-isopropylmalate and 3-isopropylmalate, via the formation of 2-isopropylmaleate. This is 3-isopropylmalate dehydratase small subunit from Acidithiobacillus ferrooxidans (strain ATCC 23270 / DSM 14882 / CIP 104768 / NCIMB 8455) (Ferrobacillus ferrooxidans (strain ATCC 23270)).